Here is a 319-residue protein sequence, read N- to C-terminus: GCN5-related N-acetyltransferase 5, chloroplastic (319 aa).

The transit peptide at 1–55 directs the protein to the chloroplast; the sequence is MAALSISLAFSVDSLKPTQSTKFGFSSSSHRYPLLYSCKSHRSNLRFAFPPSSVS. In terms of domain architecture, N-acetyltransferase spans 109-297; it reads MWVRVMRHEE…KHLMRKKLLP (189 aa). Acetyl-CoA contacts are provided by residues 218 to 220, 226 to 231, 258 to 260, and tyrosine 265; these read MTV, RRGIGW, and DEA. Tyrosine 265 (proton donor) is an active-site residue.

It belongs to the acetyltransferase family. GNAT subfamily. In terms of assembly, oligomer. In terms of processing, autoacetylated. In terms of tissue distribution, expressed in green tissues.

The protein resides in the plastid. Its subcellular location is the chloroplast. The catalysed reaction is an N-terminal L-alpha-aminoacyl-[protein] + acetyl-CoA = N-terminal N(alpha)-acetyl-L-alpha-aminoacyl-[protein] + CoA + H(+). The enzyme catalyses L-lysyl-[protein] + acetyl-CoA = N(6)-acetyl-L-lysyl-[protein] + CoA + H(+). It carries out the reaction N-terminal L-alanyl-[protein] + acetyl-CoA = N-terminal N(alpha)-acetyl-L-alanyl-[protein] + CoA + H(+). It catalyses the reaction N-terminal L-seryl-[protein] + acetyl-CoA = N-terminal N(alpha)-acetyl-L-seryl-[protein] + CoA + H(+). The catalysed reaction is N-terminal L-methionyl-[protein] + acetyl-CoA = N-terminal N(alpha)-acetyl-L-methionyl-[protein] + CoA + H(+). The enzyme catalyses N-terminal L-valyl-[protein] + acetyl-CoA = N-terminal N(alpha)-acetyl-L-valyl-[protein] + CoA + H(+). It carries out the reaction N-terminal L-threonyl-[protein] + acetyl-CoA = N-terminal N(alpha)-acetyl-L-threonyl-[protein] + CoA + H(+). Its function is as follows. Protein acetyltransferase with dual specificity triggering both N-alpha-acetylation (NTA), with a large spectrum of modified N-termini, including methionine, alanine, serine and to a lower extent threonine and valine as substrates, and epsilon-lysine acetylation (KA). In Arabidopsis thaliana (Mouse-ear cress), this protein is GCN5-related N-acetyltransferase 5, chloroplastic.